A 463-amino-acid polypeptide reads, in one-letter code: ATP synthase subunit beta (463 aa).

151-158 (GGAGVGKT) lines the ATP pocket.

It belongs to the ATPase alpha/beta chains family. As to quaternary structure, F-type ATPases have 2 components, CF(1) - the catalytic core - and CF(0) - the membrane proton channel. CF(1) has five subunits: alpha(3), beta(3), gamma(1), delta(1), epsilon(1). CF(0) has three main subunits: a(1), b(2) and c(9-12). The alpha and beta chains form an alternating ring which encloses part of the gamma chain. CF(1) is attached to CF(0) by a central stalk formed by the gamma and epsilon chains, while a peripheral stalk is formed by the delta and b chains.

Its subcellular location is the cell membrane. The catalysed reaction is ATP + H2O + 4 H(+)(in) = ADP + phosphate + 5 H(+)(out). Functionally, produces ATP from ADP in the presence of a proton gradient across the membrane. The catalytic sites are hosted primarily by the beta subunits. In Clostridium botulinum (strain ATCC 19397 / Type A), this protein is ATP synthase subunit beta.